The primary structure comprises 298 residues: Ethanolamine ammonia-lyase small subunit (298 aa).

Residues 15 to 43 (ASMGQDVPQPVAPSTQEGAKPQRAAPTAT) are disordered. Adenosylcob(III)alamin is bound by residues Val210, Glu231, and Cys261.

Belongs to the EutC family. As to quaternary structure, the basic unit is a heterodimer which dimerizes to form tetramers. The heterotetramers trimerize; 6 large subunits form a core ring with 6 small subunits projecting outwards. Adenosylcob(III)alamin is required as a cofactor.

The protein localises to the bacterial microcompartment. It catalyses the reaction ethanolamine = acetaldehyde + NH4(+). It participates in amine and polyamine degradation; ethanolamine degradation. In terms of biological role, catalyzes the deamination of various vicinal amino-alcohols to oxo compounds. Allows this organism to utilize ethanolamine as the sole source of nitrogen and carbon in the presence of external vitamin B12. This is Ethanolamine ammonia-lyase small subunit from Salmonella arizonae (strain ATCC BAA-731 / CDC346-86 / RSK2980).